Here is a 1208-residue protein sequence, read N- to C-terminus: Defective chorion protein, FC125 isoform (1208 aa).

Residues 1–19 (MRLFSLLPLLALLVVQAAG) form the signal peptide. 3 disordered regions span residues 23 to 60 (VTSD…PSIN), 184 to 212 (APAP…PDAP), and 268 to 294 (PAQP…EDPY). Polar residues predominate over residues 32 to 41 (AGSTTNSTTD). Positions 268–280 (PAQPAAAGTDAQA) are enriched in low complexity. Repeat copies occupy residues 493 to 518 (QNPM…QQIQ), 519 to 544 (QNPM…QQIQ), 545 to 570 (QNPM…QQIQ), 571 to 596 (QNPM…QQIQ), and 597 to 622 (QNPM…QQIQ). Positions 493–788 (QNPMMMQQRQ…IQQQQRQMMQ (296 aa)) are 12 X 26 AA approximate tandem repeats, Glu, Met-rich. Residues 623–652 (QNPMMMQQRQWSEEQAKIQHDQQMAQQMAQ) form a 6; approximate repeat. The 7; approximate repeat unit spans residues 653–680 (QGLMMTEQRQRQWSEDQAKIQQAQQMAQ). The stretch at 681 to 696 (QTPMMMPQMQQRQWTE) is one 8; approximate repeat. The stretch at 697–720 (DPQMVQQMQQRQWAEDQTRMQMAQ) is one 9; approximate repeat. One copy of the 10; approximate repeat lies at 721–733 (QNPMMQQQRQMAE). Residues 734-758 (NPQMMQQRQWSEEQTKIEQAQQMAQ) form an 11; approximate repeat. The 12; approximate repeat unit spans residues 759 to 788 (QNQMMMQQMQQRQWSEDQAQIQQQQRQMMQ). Residues 828–839 (EDEDNKAEDDLV) are compositionally biased toward acidic residues. Disordered regions lie at residues 828–875 (EDED…SKSA), 944–1010 (RTIN…GSIF), and 1114–1208 (VQPP…DVDD). The span at 957-977 (SESQKSNSNPPTTLTPAPQEQ) shows a compositional bias: polar residues. Acidic residues-rich tracts occupy residues 1163-1178 (PEPD…EPSE) and 1194-1208 (NDID…DVDD).

The protein localises to the secreted. Its function is as follows. Required for proper assembly of the eggshell. The chain is Defective chorion protein, FC125 isoform from Drosophila melanogaster (Fruit fly).